Consider the following 285-residue polypeptide: Methyl-CpG-binding domain protein 3 (285 aa).

The 69-residue stretch at 1–69 (MERKRWECPA…STFDFRTGKM (69 aa)) folds into the MBD domain. S56 is modified (phosphoserine). A Glycyl lysine isopeptide (Lys-Gly) (interchain with G-Cter in SUMO2) cross-link involves residue K73. S85 bears the Phosphoserine mark. Residues K90 and K92 each participate in a glycyl lysine isopeptide (Lys-Gly) (interchain with G-Cter in SUMO2) cross-link. S144 carries the post-translational modification Phosphoserine. Positions 221–279 (TDDDIRKQEELVQQVRKRLEEALMADMLAHVEELARDGEAPLDKACAEEEEEEEEEEEE) form a coiled coil. The segment covering 255 to 267 (ARDGEAPLDKACA) has biased composition (basic and acidic residues). The tract at residues 255–285 (ARDGEAPLDKACAEEEEEEEEEEEEPEPERV) is disordered. A compositionally biased stretch (acidic residues) spans 268 to 285 (EEEEEEEEEEEEPEPERV).

As to quaternary structure, heterodimer (via N-terminus) with MBD2. Component of the MeCP1 histone deacetylase complex. Component of the nucleosome remodeling and deacetylase (NuRD) repressor complex, composed of core proteins MTA1, MTA2, MTA3, RBBP4, RBBP7, HDAC1, HDAC2, MBD2, MBD3, and peripherally associated proteins CDK2AP1, CDK2AP2, GATAD2A, GATAD2B, CHD3, CHD4 and CHD5. The exact stoichiometry of the NuRD complex is unknown, and some subunits such as MBD2 and MBD3, GATAD2A and GATAD2B, and CHD3, CHD4 and CHD5 define mutually exclusive NuRD complexes. Interacts with MBD3L2 (via N-terminus); the interaction is direct. Interacts with BCL6. Interacts with CDK2AP1. Interacts with HDAC1. Interacts with MTA2. Interacts with DNMT1. Interacts with GATAD2A. Interacts with GATAD2B. Does not interact with PWWP2A. Does not interact with PWWP2B. Highly expressed in brain, heart, kidney, liver, lung, skeletal muscle, spleen and testis. Detected at lower levels in embryonic stem cells.

It is found in the nucleus. The protein resides in the chromosome. Its function is as follows. Acts as a component of the histone deacetylase NuRD complex which participates in the remodeling of chromatin. Acts as transcriptional repressor and plays a role in gene silencing. Does not bind methylated DNA by itself. Binds to a lesser degree DNA containing unmethylated CpG dinucleotides. Recruits histone deacetylases and DNA methyltransferases. This Mus musculus (Mouse) protein is Methyl-CpG-binding domain protein 3 (Mbd3).